The sequence spans 123 residues: Holo-[acyl-carrier-protein] synthase (123 aa).

Residues Asp7 and Glu56 each contribute to the Mg(2+) site.

It belongs to the P-Pant transferase superfamily. AcpS family. The cofactor is Mg(2+).

It is found in the cytoplasm. The catalysed reaction is apo-[ACP] + CoA = holo-[ACP] + adenosine 3',5'-bisphosphate + H(+). Transfers the 4'-phosphopantetheine moiety from coenzyme A to a Ser of acyl-carrier-protein. The sequence is that of Holo-[acyl-carrier-protein] synthase from Carboxydothermus hydrogenoformans (strain ATCC BAA-161 / DSM 6008 / Z-2901).